Consider the following 299-residue polypeptide: Bifunctional protein FolD 1 (299 aa).

NADP(+) contacts are provided by residues 168–170 (GRS), S193, and I234.

It belongs to the tetrahydrofolate dehydrogenase/cyclohydrolase family. As to quaternary structure, homodimer.

It carries out the reaction (6R)-5,10-methylene-5,6,7,8-tetrahydrofolate + NADP(+) = (6R)-5,10-methenyltetrahydrofolate + NADPH. The enzyme catalyses (6R)-5,10-methenyltetrahydrofolate + H2O = (6R)-10-formyltetrahydrofolate + H(+). It functions in the pathway one-carbon metabolism; tetrahydrofolate interconversion. Its function is as follows. Catalyzes the oxidation of 5,10-methylenetetrahydrofolate to 5,10-methenyltetrahydrofolate and then the hydrolysis of 5,10-methenyltetrahydrofolate to 10-formyltetrahydrofolate. This Mesorhizobium japonicum (strain LMG 29417 / CECT 9101 / MAFF 303099) (Mesorhizobium loti (strain MAFF 303099)) protein is Bifunctional protein FolD 1.